We begin with the raw amino-acid sequence, 739 residues long: NAD(P)H-quinone oxidoreductase subunit 5, chloroplastic (739 aa).

Helical transmembrane passes span 9 to 29, 39 to 59, 89 to 109, 125 to 145, 147 to 167, 185 to 205, 219 to 239, 258 to 278, 280 to 300, 327 to 347, 354 to 374, 396 to 416, 425 to 445, 542 to 562, 610 to 630, and 719 to 739; these read WVIP…LILI, IWAF…VQLS, IDPL…LVLI, FVYI…SNLI, IYFF…FWFT, GDFG…SLEF, NGIN…GAVA, TPIS…FLLA, LLPL…VGTI, LGYM…FHLI, ALLF…VGYS, TTFL…CFWS, WLYS…TAFY, LFPL…GISF, TLAI…YSFF, and ISSY…FFLS.

The protein belongs to the complex I subunit 5 family. As to quaternary structure, NDH is composed of at least 16 different subunits, 5 of which are encoded in the nucleus.

Its subcellular location is the plastid. The protein resides in the chloroplast thylakoid membrane. The catalysed reaction is a plastoquinone + NADH + (n+1) H(+)(in) = a plastoquinol + NAD(+) + n H(+)(out). It carries out the reaction a plastoquinone + NADPH + (n+1) H(+)(in) = a plastoquinol + NADP(+) + n H(+)(out). Its function is as follows. NDH shuttles electrons from NAD(P)H:plastoquinone, via FMN and iron-sulfur (Fe-S) centers, to quinones in the photosynthetic chain and possibly in a chloroplast respiratory chain. The immediate electron acceptor for the enzyme in this species is believed to be plastoquinone. Couples the redox reaction to proton translocation, and thus conserves the redox energy in a proton gradient. In Hordeum vulgare (Barley), this protein is NAD(P)H-quinone oxidoreductase subunit 5, chloroplastic (ndhF).